The primary structure comprises 123 residues: Large ribosomal subunit protein bL19 (123 aa).

It belongs to the bacterial ribosomal protein bL19 family.

Its function is as follows. This protein is located at the 30S-50S ribosomal subunit interface and may play a role in the structure and function of the aminoacyl-tRNA binding site. The protein is Large ribosomal subunit protein bL19 of Thermomicrobium roseum (strain ATCC 27502 / DSM 5159 / P-2).